The following is a 698-amino-acid chain: Protein let-99 (698 aa).

The region spanning 23–107 is the DEP domain; the sequence is FRSNLSLKTN…SESRIYLFMK (85 aa). Disordered regions lie at residues 115-188 and 653-672; these read PKPR…DDEI and ITRS…QASP. Residues 146-157 show a composition bias toward basic residues; that stretch reads RPPKARLPRRLS. Basic and acidic residues predominate over residues 178-188; that stretch reads HGFDDHKDDEI.

It is found in the cytoplasm. The protein resides in the cell cortex. Required for the proper orientation of spindles after the establishment of polarity. May play a role in interactions between the astral microtubules and the cortical cytoskeleton. Required for asymmetric forces on nuclei and spindles. Acts downstream of the PAR signaling as an intermediate that transduces polarity information to the machinery that positions the mitotic spindle, possibly by regulating force generation. Regulates gpr-1/2 asymmetric cortical localization during the first embryonic cell divisions. Acts antagonistically to the gpr-1/2 signaling pathway. Regulates mes-1 expression and/or localization pattern during early embryogenesis. This Caenorhabditis elegans protein is Protein let-99 (let-99).